A 224-amino-acid chain; its full sequence is Deoxyribose-phosphate aldolase (224 aa).

Asp92 functions as the Proton donor/acceptor in the catalytic mechanism. Lys155 (schiff-base intermediate with acetaldehyde) is an active-site residue. Lys184 functions as the Proton donor/acceptor in the catalytic mechanism.

Belongs to the DeoC/FbaB aldolase family. DeoC type 1 subfamily.

Its subcellular location is the cytoplasm. The enzyme catalyses 2-deoxy-D-ribose 5-phosphate = D-glyceraldehyde 3-phosphate + acetaldehyde. Its pathway is carbohydrate degradation; 2-deoxy-D-ribose 1-phosphate degradation; D-glyceraldehyde 3-phosphate and acetaldehyde from 2-deoxy-alpha-D-ribose 1-phosphate: step 2/2. Its function is as follows. Catalyzes a reversible aldol reaction between acetaldehyde and D-glyceraldehyde 3-phosphate to generate 2-deoxy-D-ribose 5-phosphate. The sequence is that of Deoxyribose-phosphate aldolase from Clostridium perfringens (strain ATCC 13124 / DSM 756 / JCM 1290 / NCIMB 6125 / NCTC 8237 / Type A).